The chain runs to 1985 residues: Treslin (1985 aa).

8 disordered regions span residues 574 to 609, 791 to 858, 894 to 974, 999 to 1033, 1072 to 1156, 1184 to 1243, 1849 to 1875, and 1938 to 1966; these read AQKA…LKPT, EEKS…QPNK, IQET…SIVE, RRNS…RPGS, VYKT…LWGR, VKTP…PSGY, HEDS…QSRS, and FSDG…SPFR. Over residues 823–837 the composition is skewed to basic residues; the sequence is RSAKKRRSTALARHR. The segment covering 964–974 has biased composition (low complexity); the sequence is SESNSNISIVE. Polar residues-rich tracts occupy residues 999–1026 and 1085–1097; these read RRNS…QLQQ and SKNI…QSGN. A compositionally biased stretch (low complexity) spans 1105-1114; sequence TPYTPRTPSR. Basic and acidic residues-rich tracts occupy residues 1144 to 1156 and 1191 to 1200; these read KPEE…LWGR and QRLESKDFRT. Residues 1201–1224 show a composition bias toward polar residues; it reads PSRTPTRSNNTTPAKQSMQISNTP. Positions 1225–1238 are enriched in basic and acidic residues; it reads RKSDLKHPQEHESR.

It belongs to the treslin family. As to quaternary structure, interacts with topbp1 (via BRCT domains); interaction is cdk2-dependent. Component of the replisome complex. Post-translationally, phosphorylated during interphase. Cdk2 promotes both phosphorylation and formation of a ticrr-topbp1 complex.

Its subcellular location is the nucleus. In terms of biological role, regulator of DNA replication and S/M and G2/M checkpoints. Regulates the triggering of DNA replication initiation via its interaction with topbp1 by participating in cdk2-mediated loading of cdc45l onto replication origins. Required for the transition from pre-replication complex (pre-RC) to pre-initiation complex (pre-IC). Required to prevent mitotic entry after treatment with ionizing radiation. In Xenopus laevis (African clawed frog), this protein is Treslin (ticrr).